The following is a 545-amino-acid chain: Cytochrome bc1 complex cytochrome b subunit (545 aa).

Residues 54 to 74 traverse the membrane as a helical segment; that stretch reads VCLYSFIIIILTGVYLTLFFH. Heme is bound by residues His-118 and His-132. 3 helical membrane-spanning segments follow: residues 122 to 142, 150 to 170, and 182 to 202; these read ALIF…TGAF, WLFG…GYSL, and FMEG…FFLF. Residues His-219 and His-234 each contribute to the heme site. A run of 5 helical transmembrane segments spans residues 220-240, 269-289, 335-355, 385-405, and 413-433; these read ILLL…LVFY, AGGF…IATI, LVLG…AIAV, FGVA…NDLW, and INAI…VAFI.

This sequence belongs to the cytochrome b family. In terms of assembly, the cytochrome bc1 complex is composed of a cytochrome b (QcrB), the Rieske iron-sulfur protein (QcrA) and a diheme cytochrome c (QcrC) subunit. Requires heme as cofactor.

The protein resides in the cell membrane. It carries out the reaction a quinol + 2 Fe(III)-[cytochrome c](out) = a quinone + 2 Fe(II)-[cytochrome c](out) + 2 H(+)(out). Cytochrome b subunit of the cytochrome bc1 complex, an essential component of the respiratory electron transport chain required for ATP synthesis. The bc1 complex catalyzes the oxidation of ubiquinol and the reduction of cytochrome c in the respiratory chain. The bc1 complex operates through a Q-cycle mechanism that couples electron transfer to generation of the proton gradient that drives ATP synthesis. The cytochrome b subunit contains two ubiquinol reactive sites: the oxidation (QP) site and the reduction (QN) site. The polypeptide is Cytochrome bc1 complex cytochrome b subunit (qcrB) (Streptomyces coelicolor (strain ATCC BAA-471 / A3(2) / M145)).